Here is a 501-residue protein sequence, read N- to C-terminus: ATP synthase subunit alpha (501 aa).

169–176 is a binding site for ATP; that stretch reads GDRQTGKT.

It belongs to the ATPase alpha/beta chains family. F-type ATPases have 2 components, CF(1) - the catalytic core - and CF(0) - the membrane proton channel. CF(1) has five subunits: alpha(3), beta(3), gamma(1), delta(1), epsilon(1). CF(0) has three main subunits: a(1), b(2) and c(9-12). The alpha and beta chains form an alternating ring which encloses part of the gamma chain. CF(1) is attached to CF(0) by a central stalk formed by the gamma and epsilon chains, while a peripheral stalk is formed by the delta and b chains.

The protein resides in the cell membrane. The enzyme catalyses ATP + H2O + 4 H(+)(in) = ADP + phosphate + 5 H(+)(out). In terms of biological role, produces ATP from ADP in the presence of a proton gradient across the membrane. The alpha chain is a regulatory subunit. This chain is ATP synthase subunit alpha, found in Streptococcus equi subsp. zooepidemicus (strain H70).